A 284-amino-acid chain; its full sequence is Ribosomal RNA small subunit methyltransferase A (284 aa).

S-adenosyl-L-methionine-binding residues include asparagine 33, leucine 35, glycine 60, glutamate 81, aspartate 101, and asparagine 124.

It belongs to the class I-like SAM-binding methyltransferase superfamily. rRNA adenine N(6)-methyltransferase family. RsmA subfamily.

Its subcellular location is the cytoplasm. It catalyses the reaction adenosine(1518)/adenosine(1519) in 16S rRNA + 4 S-adenosyl-L-methionine = N(6)-dimethyladenosine(1518)/N(6)-dimethyladenosine(1519) in 16S rRNA + 4 S-adenosyl-L-homocysteine + 4 H(+). In terms of biological role, specifically dimethylates two adjacent adenosines (A1518 and A1519) in the loop of a conserved hairpin near the 3'-end of 16S rRNA in the 30S particle. May play a critical role in biogenesis of 30S subunits. The protein is Ribosomal RNA small subunit methyltransferase A of Chlamydia felis (strain Fe/C-56) (Chlamydophila felis).